Reading from the N-terminus, the 137-residue chain is Small ribosomal subunit protein bS6 (137 aa).

Positions 96–137 (ITEASPMAKAKDERDTRRSSEERAPRAEATEEVKESAENTAE) are disordered. A compositionally biased stretch (basic and acidic residues) spans 104–137 (KAKDERDTRRSSEERAPRAEATEEVKESAENTAE).

The protein belongs to the bacterial ribosomal protein bS6 family.

Functionally, binds together with bS18 to 16S ribosomal RNA. This Shewanella piezotolerans (strain WP3 / JCM 13877) protein is Small ribosomal subunit protein bS6.